The sequence spans 276 residues: NADPH-dependent 7-cyano-7-deazaguanine reductase (276 aa).

83-85 is a binding site for substrate; that stretch reads IES. 85-86 contacts NADPH; that stretch reads SK. Residue cysteine 184 is the Thioimide intermediate of the active site. Catalysis depends on aspartate 191, which acts as the Proton donor. Residue 223-224 coordinates substrate; it reads HE. 252 to 253 is an NADPH binding site; sequence RG.

It belongs to the GTP cyclohydrolase I family. QueF type 2 subfamily. As to quaternary structure, homodimer.

The protein localises to the cytoplasm. It catalyses the reaction 7-aminomethyl-7-carbaguanine + 2 NADP(+) = 7-cyano-7-deazaguanine + 2 NADPH + 3 H(+). It functions in the pathway tRNA modification; tRNA-queuosine biosynthesis. In terms of biological role, catalyzes the NADPH-dependent reduction of 7-cyano-7-deazaguanine (preQ0) to 7-aminomethyl-7-deazaguanine (preQ1). In Pseudomonas savastanoi pv. phaseolicola (strain 1448A / Race 6) (Pseudomonas syringae pv. phaseolicola (strain 1448A / Race 6)), this protein is NADPH-dependent 7-cyano-7-deazaguanine reductase.